A 55-amino-acid polypeptide reads, in one-letter code: ATP synthase F(0) complex subunit 8 (55 aa).

The chain crosses the membrane as a helical span at residues 7–24 (NPWFYIMLMSWLTFSLII). The disordered stretch occupies residues 35 to 55 (NPPSNKTSTTTRTLPWTWPWT). The span at 41-55 (TSTTTRTLPWTWPWT) shows a compositional bias: low complexity.

This sequence belongs to the ATPase protein 8 family. In terms of assembly, component of the ATP synthase complex composed at least of ATP5F1A/subunit alpha, ATP5F1B/subunit beta, ATP5MC1/subunit c (homooctomer), MT-ATP6/subunit a, MT-ATP8/subunit 8, ATP5ME/subunit e, ATP5MF/subunit f, ATP5MG/subunit g, ATP5MK/subunit k, ATP5MJ/subunit j, ATP5F1C/subunit gamma, ATP5F1D/subunit delta, ATP5F1E/subunit epsilon, ATP5PF/subunit F6, ATP5PB/subunit b, ATP5PD/subunit d, ATP5PO/subunit OSCP. ATP synthase complex consists of a soluble F(1) head domain (subunits alpha(3) and beta(3)) - the catalytic core - and a membrane F(0) domain - the membrane proton channel (subunits c, a, 8, e, f, g, k and j). These two domains are linked by a central stalk (subunits gamma, delta, and epsilon) rotating inside the F1 region and a stationary peripheral stalk (subunits F6, b, d, and OSCP).

The protein resides in the mitochondrion membrane. In terms of biological role, subunit 8, of the mitochondrial membrane ATP synthase complex (F(1)F(0) ATP synthase or Complex V) that produces ATP from ADP in the presence of a proton gradient across the membrane which is generated by electron transport complexes of the respiratory chain. ATP synthase complex consist of a soluble F(1) head domain - the catalytic core - and a membrane F(1) domain - the membrane proton channel. These two domains are linked by a central stalk rotating inside the F(1) region and a stationary peripheral stalk. During catalysis, ATP synthesis in the catalytic domain of F(1) is coupled via a rotary mechanism of the central stalk subunits to proton translocation. In vivo, can only synthesize ATP although its ATP hydrolase activity can be activated artificially in vitro. Part of the complex F(0) domain. In Corythaixoides concolor (Grey go-away-bird), this protein is ATP synthase F(0) complex subunit 8.